A 230-amino-acid polypeptide reads, in one-letter code: Response regulator MprA (230 aa).

The region spanning 4–118 (RILVVDDDRA…ELLARMRALL (115 aa)) is the Response regulatory domain. Asp48 carries the post-translational modification 4-aspartylphosphate. The segment at residues 129–227 (SMAMRFSDLT…VRGVGYVLRE (99 aa)) is a DNA-binding region (ompR/PhoB-type).

Phosphorylated and dephosphorylated by MprB.

Its subcellular location is the cytoplasm. Member of the two-component regulatory system MprB/MprA which contributes to maintaining a balance among several systems involved in stress resistance and is required for establishment and maintenance of persistent infection in the host. Functions as a transcriptional regulator that recognizes a 19-bp nucleotide motif comprizing two loosely conserved 8-bp direct DNA-binding motif repeats separated by a 3-bp spacer region. This chain is Response regulator MprA (mprA), found in Mycobacterium tuberculosis (strain ATCC 25177 / H37Ra).